The following is a 170-amino-acid chain: MASEAEKTFHRFAAFGESSSSGTEMNNKNFSKLCKDCGIMDGKTVTSTDVDIVFSKVKAKNARTITFQQFKEAVKELGQKRFKGKSPDEVLENIYGLMEGKDPATTGATKATTVGAVDRLTDTSKYTGTHKERFDESGKGKGIAGREEMTDNTGYVSGYKGSGTYDKKTK.

The tract at residues 127 to 170 is disordered; it reads TGTHKERFDESGKGKGIAGREEMTDNTGYVSGYKGSGTYDKKTK. The span at 129-149 shows a compositional bias: basic and acidic residues; sequence THKERFDESGKGKGIAGREEM.

Belongs to the TPPP family. As to expression, expressed in spermatids. Detected in liver cancer (at protein level).

Its subcellular location is the cytoplasm. The protein localises to the cytosol. The protein resides in the cell projection. It is found in the cilium. It localises to the flagellum. In terms of biological role, probable regulator of microtubule dynamics required for sperm motility. In contrast to other members of the family, has no microtubule bundling activity. The sequence is that of Tubulin polymerization-promoting protein family member 2 from Homo sapiens (Human).